Consider the following 121-residue polypeptide: HTH-type transcriptional regulator Rv1152 (121 aa).

One can recognise an HTH gntR-type domain in the interval 15-83 (KPLFDQLRTQ…GRFGTFISRF (69 aa)). A DNA-binding region (H-T-H motif) is located at residues 43-62 (VRDLAGQLGVAANTVARAYR).

It is found in the cytoplasm. The protein resides in the secreted. The protein localises to the cell wall. Functionally, transcriptional regulator that modulates resistance to vancomycin and aminoglycosides. Negatively regulates the expression of several genes responsive to vancomycin, resulting in decreased susceptibility of bacteria to vancomycin. Negatively regulates the expression of genes encoding the ribosome binding protein Hsp, the small subunit of sulfate adenylyltransferase CysD, the L-lysine-epsilon aminotransferase LAT and the protease HtpX. Also modulates purine metabolism and aminoglycoside antibiotic resistance. Negatively regulates the expression of purine metabolism-related genes and the accumulation of purine metabolites, which affects aminoglycoside antibiotic resistance. This chain is HTH-type transcriptional regulator Rv1152, found in Mycobacterium tuberculosis (strain ATCC 25618 / H37Rv).